Consider the following 271-residue polypeptide: Putative phosphoenolpyruvate synthase regulatory protein (271 aa).

An ADP-binding site is contributed by 152–159; it reads GVSRCGKT.

The protein belongs to the pyruvate, phosphate/water dikinase regulatory protein family. PSRP subfamily.

It catalyses the reaction [pyruvate, water dikinase] + ADP = [pyruvate, water dikinase]-phosphate + AMP + H(+). The catalysed reaction is [pyruvate, water dikinase]-phosphate + phosphate + H(+) = [pyruvate, water dikinase] + diphosphate. Its function is as follows. Bifunctional serine/threonine kinase and phosphorylase involved in the regulation of the phosphoenolpyruvate synthase (PEPS) by catalyzing its phosphorylation/dephosphorylation. The sequence is that of Putative phosphoenolpyruvate synthase regulatory protein from Legionella pneumophila (strain Corby).